Here is a 372-residue protein sequence, read N- to C-terminus: Flagellar P-ring protein (372 aa).

An N-terminal signal peptide occupies residues M1–A29.

This sequence belongs to the FlgI family. In terms of assembly, the basal body constitutes a major portion of the flagellar organelle and consists of four rings (L,P,S, and M) mounted on a central rod.

Its subcellular location is the periplasm. The protein resides in the bacterial flagellum basal body. In terms of biological role, assembles around the rod to form the L-ring and probably protects the motor/basal body from shearing forces during rotation. This Anaeromyxobacter dehalogenans (strain 2CP-1 / ATCC BAA-258) protein is Flagellar P-ring protein.